Here is a 271-residue protein sequence, read N- to C-terminus: Regulatory protein RecX (271 aa).

The protein belongs to the RecX family.

It localises to the cytoplasm. Modulates RecA activity. The polypeptide is Regulatory protein RecX (Lactobacillus delbrueckii subsp. bulgaricus (strain ATCC 11842 / DSM 20081 / BCRC 10696 / JCM 1002 / NBRC 13953 / NCIMB 11778 / NCTC 12712 / WDCM 00102 / Lb 14)).